The following is a 171-amino-acid chain: GTP-dependent dephospho-CoA kinase (171 aa).

GTP is bound by residues Asp49, Val51, Asp68, and Glu122.

The protein belongs to the GTP-dependent DPCK family.

It catalyses the reaction 3'-dephospho-CoA + GTP = GDP + CoA + H(+). Its pathway is cofactor biosynthesis; coenzyme A biosynthesis. Catalyzes the GTP-dependent phosphorylation of the 3'-hydroxyl group of dephosphocoenzyme A to form coenzyme A (CoA). This is GTP-dependent dephospho-CoA kinase from Hyperthermus butylicus (strain DSM 5456 / JCM 9403 / PLM1-5).